The chain runs to 220 residues: Octanoyltransferase (220 aa).

The region spanning 27–208 (PGTADEIWLC…QLARAHGQAV (182 aa)) is the BPL/LPL catalytic domain. Substrate is bound by residues 66-73 (RGGQVTYH), 139-141 (ALG), and 152-154 (GLA). Cysteine 170 serves as the catalytic Acyl-thioester intermediate.

Belongs to the LipB family.

Its subcellular location is the cytoplasm. The catalysed reaction is octanoyl-[ACP] + L-lysyl-[protein] = N(6)-octanoyl-L-lysyl-[protein] + holo-[ACP] + H(+). It functions in the pathway protein modification; protein lipoylation via endogenous pathway; protein N(6)-(lipoyl)lysine from octanoyl-[acyl-carrier-protein]: step 1/2. In terms of biological role, catalyzes the transfer of endogenously produced octanoic acid from octanoyl-acyl-carrier-protein onto the lipoyl domains of lipoate-dependent enzymes. Lipoyl-ACP can also act as a substrate although octanoyl-ACP is likely to be the physiological substrate. In Bordetella bronchiseptica (strain ATCC BAA-588 / NCTC 13252 / RB50) (Alcaligenes bronchisepticus), this protein is Octanoyltransferase.